We begin with the raw amino-acid sequence, 355 residues long: WD repeat domain phosphoinositide-interacting protein 4 (355 aa).

2 WD repeats span residues 2 to 40 (SQQR…EKGH) and 185 to 225 (AHQS…QLVE). The L/FRRG motif motif lies at 226–229 (LRRG). A WD 3 repeat occupies 230 to 269 (TDPATLYCINFSHDSSFLCSSSDKGTVHIFALKDTKLNRR).

Belongs to the WD repeat PROPPIN family.

It localises to the preautophagosomal structure. Component of the autophagy machinery that controls the major intracellular degradation process by which cytoplasmic materials are packaged into autophagosomes and delivered to lysosomes for degradation. Binds phosphatidylinositol 3-phosphate (PtdIns3P). This Xenopus laevis (African clawed frog) protein is WD repeat domain phosphoinositide-interacting protein 4 (wdr45).